The chain runs to 120 residues: UPF0295 protein Aflv_0370 (120 aa).

A run of 2 helical transmembrane segments spans residues 12–32 (IRTFALSLIFIGFFVMYGGIF) and 42–62 (LFMILGLLFIIASTVVYFWIG).

It belongs to the UPF0295 family.

Its subcellular location is the cell membrane. In Anoxybacillus flavithermus (strain DSM 21510 / WK1), this protein is UPF0295 protein Aflv_0370.